The following is a 1026-amino-acid chain: Cadherin-like and PC-esterase domain-containing protein 1 (1026 aa).

The signal sequence occupies residues 1-34; sequence MVCRPVFPCRRRFCPRPFLVGLVVAICLFYQTLT. 6 N-linked (GlcNAc...) asparagine glycosylation sites follow: N251, N404, N413, N737, N791, and N985.

The protein belongs to the PC-esterase family.

This chain is Cadherin-like and PC-esterase domain-containing protein 1 (CPED1), found in Homo sapiens (Human).